A 544-amino-acid chain; its full sequence is Chaperonin GroEL 4 (544 aa).

Residues 30-33, K51, 87-91, G415, and D496 contribute to the ATP site; these read TLGP and DGTTT.

Belongs to the chaperonin (HSP60) family. Forms a cylinder of 14 subunits composed of two heptameric rings stacked back-to-back. Interacts with the co-chaperonin GroES.

The protein resides in the cytoplasm. The catalysed reaction is ATP + H2O + a folded polypeptide = ADP + phosphate + an unfolded polypeptide.. In terms of biological role, together with its co-chaperonin GroES, plays an essential role in assisting protein folding. The GroEL-GroES system forms a nano-cage that allows encapsulation of the non-native substrate proteins and provides a physical environment optimized to promote and accelerate protein folding. In Sinorhizobium medicae (strain WSM419) (Ensifer medicae), this protein is Chaperonin GroEL 4.